The sequence spans 391 residues: Small ribosomal subunit protein bS1 (391 aa).

4 S1 motif domains span residues 16-90 (GDKV…LSRR), 108-173 (NEII…LSRK), 194-262 (GDVI…LSIK), and 279-348 (NDDI…LSIK). Residues 356–381 (VVESDPSTTKAYLESEEEDNPTIGDM) form a disordered region.

Belongs to the bacterial ribosomal protein bS1 family.

Functionally, binds mRNA; thus facilitating recognition of the initiation point. It is needed to translate mRNA with a short Shine-Dalgarno (SD) purine-rich sequence. The sequence is that of Small ribosomal subunit protein bS1 (rpsA) from Staphylococcus aureus (strain MRSA252).